The primary structure comprises 93 residues: UPF0358 protein RBAM_014700 (93 aa).

This sequence belongs to the UPF0358 family.

The polypeptide is UPF0358 protein RBAM_014700 (Bacillus velezensis (strain DSM 23117 / BGSC 10A6 / LMG 26770 / FZB42) (Bacillus amyloliquefaciens subsp. plantarum)).